Consider the following 149-residue polypeptide: Large ribosomal subunit protein bL9 (149 aa).

It belongs to the bacterial ribosomal protein bL9 family.

Binds to the 23S rRNA. The protein is Large ribosomal subunit protein bL9 of Fervidobacterium nodosum (strain ATCC 35602 / DSM 5306 / Rt17-B1).